A 115-amino-acid chain; its full sequence is Synaptobrevin homolog 2 (115 aa).

Over residues 1-16 (MSSSVPYDPYVPPEES) the composition is skewed to low complexity. The segment at 1-28 (MSSSVPYDPYVPPEESNSGANPNSQNKT) is disordered. The Cytoplasmic segment spans residues 1–93 (MSSSVPYDPY…MWWKDLKMRM (93 aa)). The span at 17–28 (NSGANPNSQNKT) shows a compositional bias: polar residues. The v-SNARE coiled-coil homology domain maps to 27 to 87 (KTAALRQEID…NRVRKQMWWK (61 aa)). Ser58 is subject to Phosphoserine. Lys62 participates in a covalent cross-link: Glycyl lysine isopeptide (Lys-Gly) (interchain with G-Cter in ubiquitin). Cys94 is lipidated: S-palmitoyl cysteine. Residues 94 to 112 (CLFLVVIILLVVIIVPIVV) traverse the membrane as a helical; Anchor for type IV membrane protein segment. Residues 113 to 115 (HFS) lie on the Vesicular side of the membrane.

Belongs to the synaptobrevin family. In terms of processing, palmitoylated by SWF1.

It localises to the endomembrane system. Functionally, SNC1 and SNC2 are vesicle-targeting proteins essential for normal secretory traffic between the Golgi and the plasma membrane. They may also be involved in vesicle fusion. This is Synaptobrevin homolog 2 (SNC2) from Saccharomyces cerevisiae (strain ATCC 204508 / S288c) (Baker's yeast).